A 185-amino-acid chain; its full sequence is Ovomucoid (185 aa).

3 Kazal-like domains span residues 1–63 (VEVD…ECRE), 64–128 (AVPM…ECRK), and 131–185 (AAVS…FGKC). Disulfide bonds link cysteine 5/cysteine 43, cysteine 22/cysteine 40, cysteine 30/cysteine 61, cysteine 69/cysteine 108, cysteine 86/cysteine 105, cysteine 94/cysteine 126, cysteine 137/cysteine 167, cysteine 145/cysteine 164, and cysteine 153/cysteine 185. An N-linked (GlcNAc...) asparagine glycan is attached at asparagine 174.

It is found in the secreted. This Meleagris gallopavo (Wild turkey) protein is Ovomucoid.